The primary structure comprises 220 residues: 3-keto-L-gulonate-6-phosphate decarboxylase SgbH (220 aa).

Residue D11 participates in substrate binding. Positions 33 and 62 each coordinate Mg(2+). R192 contacts substrate.

This sequence belongs to the HPS/KGPDC family. KGPDC subfamily. Homodimer. Mg(2+) is required as a cofactor.

It catalyses the reaction 3-dehydro-L-gulonate 6-phosphate + H(+) = L-xylulose 5-phosphate + CO2. In terms of biological role, catalyzes the decarboxylation of 3-keto-L-gulonate-6-P into L-xylulose-5-P. May be involved in the utilization of 2,3-diketo-L-gulonate. The polypeptide is 3-keto-L-gulonate-6-phosphate decarboxylase SgbH (sgbH) (Escherichia coli (strain K12)).